The primary structure comprises 197 residues: Recombination protein RecR (197 aa).

The segment at 54 to 69 adopts a C4-type zinc-finger fold; the sequence is CQQCNNYTEQTLCTLC. Residues 77–172 form the Toprim domain; the sequence is TLLCVVESPA…NISQLAHGIP (96 aa).

This sequence belongs to the RecR family.

May play a role in DNA repair. It seems to be involved in an RecBC-independent recombinational process of DNA repair. It may act with RecF and RecO. This Legionella pneumophila (strain Paris) protein is Recombination protein RecR.